The following is a 426-amino-acid chain: Divalent metal cation transporter MntH (426 aa).

The next 10 membrane-spanning stretches (helical) occupy residues 31 to 51, 58 to 78, 134 to 156, 169 to 189, 208 to 228, 256 to 276, 298 to 318, 337 to 357, 363 to 383, and 402 to 422; these read WYLLGPAFVAAIAYVDPGNVA, AQFGYLQLWVVVVANVLAGLV, ILFRVSLLLGGVITGTVSLLLLM, VITGLLFVIVVGFTSSFFVAT, SVLLAAAIIGATVMPHAVYLH, VILAMTIAGIVNTAMLLVAAI, LGATIAMLFAIGLLASSLASA, IPMLIRRLITLCPAIAILALG, ALVLSQIVLSFGIPFAVLPLV, and TVLGWAVAILVSLLNVVLIYL.

The protein belongs to the NRAMP family.

It localises to the cell membrane. Functionally, h(+)-stimulated, divalent metal cation uptake system. In Mycobacterium leprae (strain TN), this protein is Divalent metal cation transporter MntH.